Reading from the N-terminus, the 41-residue chain is Inducible serine protease inhibitor 3 (41 aa).

In terms of biological role, inhibits trypsin and the toxin proteases PR1 and PR2 of M.anisopliae. Does not inhibit chymotrypsin, subtilisin Carlsberg, proteinase K and porcine pancreatic elastase. In Galleria mellonella (Greater wax moth), this protein is Inducible serine protease inhibitor 3.